Here is a 195-residue protein sequence, read N- to C-terminus: Fe/S biogenesis protein NfuA (195 aa).

The [4Fe-4S] cluster site is built by Cys-152 and Cys-155.

The protein belongs to the NfuA family. In terms of assembly, homodimer. [4Fe-4S] cluster is required as a cofactor.

Functionally, involved in iron-sulfur cluster biogenesis. Binds a 4Fe-4S cluster, can transfer this cluster to apoproteins, and thereby intervenes in the maturation of Fe/S proteins. Could also act as a scaffold/chaperone for damaged Fe/S proteins. This is Fe/S biogenesis protein NfuA from Vibrio cholerae serotype O1 (strain ATCC 39541 / Classical Ogawa 395 / O395).